We begin with the raw amino-acid sequence, 367 residues long: Chorismate synthase (367 aa).

Residues 41–60 are disordered; the sequence is FTHDLQRRASGKSRHTSARR. 2 residues coordinate NADP(+): Arg-48 and Arg-54. Residues 125-127, 238-239, Gly-278, 293-297, and Arg-319 contribute to the FMN site; these read RSS, NA, and KPTSS.

Belongs to the chorismate synthase family. As to quaternary structure, homotetramer. The cofactor is FMNH2.

The enzyme catalyses 5-O-(1-carboxyvinyl)-3-phosphoshikimate = chorismate + phosphate. The protein operates within metabolic intermediate biosynthesis; chorismate biosynthesis; chorismate from D-erythrose 4-phosphate and phosphoenolpyruvate: step 7/7. In terms of biological role, catalyzes the anti-1,4-elimination of the C-3 phosphate and the C-6 proR hydrogen from 5-enolpyruvylshikimate-3-phosphate (EPSP) to yield chorismate, which is the branch point compound that serves as the starting substrate for the three terminal pathways of aromatic amino acid biosynthesis. This reaction introduces a second double bond into the aromatic ring system. The protein is Chorismate synthase of Xanthomonas axonopodis pv. citri (strain 306).